A 763-amino-acid polypeptide reads, in one-letter code: Endothelin-converting enzyme 2 (763 aa).

The Cytoplasmic segment spans residues 1-60 (MNVALHELGGGGSMVEYKRAKLRDEESPEITVEGRATRDSLEVGFQKRTRQLFGSHTQLE). A Phosphoserine modification is found at serine 27. A helical; Signal-anchor for type II membrane protein transmembrane segment spans residues 61-81 (LVLAGLILVLAALLLGCLVAL). The Lumenal segment spans residues 82–763 (WVHRDPAHST…MNPGQLCEVW (682 aa)). The region spanning 91-763 (TCVTEACIRV…MNPGQLCEVW (673 aa)) is the Peptidase M13 domain. Cystine bridges form between cysteine 92-cysteine 97, cysteine 115-cysteine 748, cysteine 123-cysteine 708, cysteine 179-cysteine 428, and cysteine 637-cysteine 760. N-linked (GlcNAc...) asparagine glycosylation is found at asparagine 159, asparagine 163, asparagine 204, asparagine 264, asparagine 309, asparagine 376, and asparagine 532. Histidine 600 contacts Zn(2+). The active site involves glutamate 601. Histidine 604 is a Zn(2+) binding site. Asparagine 625 and asparagine 633 each carry an N-linked (GlcNAc...) asparagine glycan. Glutamate 660 is a Zn(2+) binding site. Residue aspartate 664 is the Proton donor of the active site.

It belongs to the peptidase M13 family. Zn(2+) serves as cofactor.

The protein resides in the golgi apparatus membrane. It localises to the cytoplasmic vesicle. It is found in the secretory vesicle membrane. The catalysed reaction is Hydrolysis of the 21-Trp-|-Val-22 bond in big endothelin to form endothelin 1.. Converts big endothelin-1 to endothelin-1. Also involved in the processing of various neuroendocrine peptides, including neurotensin, angiotensin I, substance P, proenkephalin-derived peptides, and prodynorphin-derived peptides. May play a role in amyloid-beta processing. The polypeptide is Endothelin-converting enzyme 2 (Mus musculus (Mouse)).